The sequence spans 370 residues: Probable trehalose-phosphate phosphatase J (370 aa).

This sequence belongs to the trehalose phosphatase family. A divalent metal cation serves as cofactor.

The enzyme catalyses alpha,alpha-trehalose 6-phosphate + H2O = alpha,alpha-trehalose + phosphate. It functions in the pathway glycan biosynthesis; trehalose biosynthesis. Functionally, removes the phosphate from trehalose 6-phosphate to produce free trehalose. Trehalose accumulation in plant may improve abiotic stress tolerance. This is Probable trehalose-phosphate phosphatase J (TPPJ) from Arabidopsis thaliana (Mouse-ear cress).